The following is a 604-amino-acid chain: MDPQQQFCLKWNSFSSNLAITFSNLFKSDLLADVILSCDGVVFKAHKLILAACSKKFADLFENTPTNGQCVIILEATTPDNMAALLEFMYKGEVHVSQEALNSFLKSAESLQVKGLSTETGRLAAQQAQQHMGDLSPLDSPTGRRSVRNSLSGGSSSIVPGGVGIGLGGGATGANSMSGMGIGNGLSLAGMAAGGGMAAAANAAASSLSTLAASANIVDRCGSAGANIISGSAAGIGGSHSGGAGNGSGTVGIGGNGVGSGGGNNGPISLGSGAGAAHHLGGSTGILKQECDSLMHPGGSSSSSGMGYTHVPPIYRPINYEPPRKRAIVRSPYSEQEQRGSVLRDGSKSSECPSPINKPPYHRPSSSASSTAPTEADTMHSERASPQSSRYENHSPSTTAGNGNATSSLERIVKSERNNGSANEANDDDRELMDESTDNGAEDLRVKLENLKYSPPPPPNSNTSSTTPNTLLENLKADGTLSSNLAASIAPADMLNVWNATKMNNKNSVNTADGKKLKCLYCDRLYGYETNLRAHIRQRHQGIRVPCPFCERTFTRNNTVRRHIAREHKQEIGLAAGATIAPAHLAAAAAASAAATAAASNHSP.

The BTB domain maps to 32–98 (ADVILSCDGV…MYKGEVHVSQ (67 aa)). Disordered stretches follow at residues 122-155 (RLAA…SGGS), 291-310 (CDSL…GYTH), 330-437 (RSPY…DEST), and 450-470 (NLKY…TPNT). Low complexity predominate over residues 364–374 (PSSSASSTAPT). Residues 384 to 409 (ASPQSSRYENHSPSTTAGNGNATSSL) are compositionally biased toward polar residues. Residues 425 to 437 (ANDDDRELMDEST) show a composition bias toward acidic residues. Positions 461 to 470 (SNTSSTTPNT) are enriched in low complexity. C2H2-type zinc fingers lie at residues 517–540 (LKCL…RQRH) and 545–568 (VPCP…AREH).

In terms of tissue distribution, broadly expressed in the developing larval central nervous system (at protein level). Expressed in the larval lymph gland and circulating hemocytes (at protein level). Expressed in all cell types of the adult testis stem cell niche but not detected in somatic cells of the adult ovary (at protein level). In the testis, expressed at high levels in cyst stem cells and early cyst cells and, at lower levels, in germline stem cells (at protein level).

It localises to the nucleus. Its function is as follows. Required for morphological differentiation of postmitotic neurons during postembryonic brain development. Ensures production of appropriate neuron subtypes within a lineage by preventing precocious generation of late neuronal types of that lineage. Acts as a downstream mediator of the transcriptional activator Stat92e and is required for the development of the eye-antennal disk which gives rise to the adult eye, antenna and head capsule, for transcriptional repression of the Notch receptor ligand Ser and for the self-renewal of cyst stem cells in the testis. In the adult testis, maintains the male identify of adult somatic cyst stem cells. Represses expression and alternative splicing of transformer pre-mRNA, resulting in the production of the male-specific isoform of transcription factor dsx which ensures male-specific transcription of target genes. Plays a role in actin nuclear localization through its involvement in repressing the expression of the kinase Cdi. This maintains the cofilin/actin-depolymerizing factor homolog tsr in its unphosphorylated state which is required for actin nuclear import. In Drosophila melanogaster (Fruit fly), this protein is Zinc finger protein chinmo.